The primary structure comprises 186 residues: Tumor necrosis factor alpha-induced protein 8-like protein 1 (186 aa).

This sequence belongs to the TNFAIP8 family. In terms of assembly, interacts with FBXW5; TNFAIP8L1 competes with TSC2 to bind FBXW5 increasing TSC2 stability by preventing its ubiquitination. As to expression, high expression detected in most carcinoma cell lines, especially in cells transformed with virus genomes.

It is found in the cytoplasm. Its function is as follows. Acts as a negative regulator of mTOR activity. The chain is Tumor necrosis factor alpha-induced protein 8-like protein 1 (TNFAIP8L1) from Homo sapiens (Human).